The primary structure comprises 115 residues: Large ribosomal subunit protein bL21 (115 aa).

This sequence belongs to the bacterial ribosomal protein bL21 family. As to quaternary structure, part of the 50S ribosomal subunit. Contacts protein L20.

This protein binds to 23S rRNA in the presence of protein L20. This Picosynechococcus sp. (strain ATCC 27264 / PCC 7002 / PR-6) (Agmenellum quadruplicatum) protein is Large ribosomal subunit protein bL21.